Reading from the N-terminus, the 241-residue chain is Alkylated DNA repair protein ALKBH6 homolog (241 aa).

The Fe2OG dioxygenase domain occupies 87–232 (AINHVLINEY…RVSLTCRLVP (146 aa)). 3 residues coordinate Fe cation: His105, Asp107, and His181. Residues Arg223 and Arg229 each contribute to the 2-oxoglutarate site.

This sequence belongs to the alkB family. Requires Fe(2+) as cofactor.

It is found in the nucleus. In terms of biological role, probable RNA demethylase that binds to both N6-methyladenosine-containing- (m(6)A) and C5-methylcytidine-containing- (m(5)C) RNAs, thus being a probable m(6)A and m(5)C eraser. Involved in responses to abscisic acid (ABA) via the modulation of the expression of ABA signaling-related genes (e.g. ABI3 and ABI4). Acts as a negative regulator during seed germination under abiotic stresses (e.g. salt, cold and ABA). Positive modulator of seedling growth and survival in response to drought and heat, but counteracts tolerance to salt. This Arabidopsis thaliana (Mouse-ear cress) protein is Alkylated DNA repair protein ALKBH6 homolog.